Here is a 134-residue protein sequence, read N- to C-terminus: Large ribosomal subunit protein bL17 (134 aa).

It belongs to the bacterial ribosomal protein bL17 family. Part of the 50S ribosomal subunit. Contacts protein L32.

The sequence is that of Large ribosomal subunit protein bL17 from Paracidovorax citrulli (strain AAC00-1) (Acidovorax citrulli).